Consider the following 409-residue polypeptide: Alpha-1-antitrypsin (409 aa).

Positions 1 to 15 are cleaved as a signal peptide; sequence LLLAGLCCLLPGSLA. The interval 18 to 39 is disordered; that stretch reads PQGDAAQKTDTPPHDQNHPTLN. N61, N98, N136, and N262 each carry an N-linked (GlcNAc...) asparagine glycan. The segment at 364–383 is RCL; sequence GAMFLEAIPMSIPPEVKFNK. S374 is subject to Phosphoserine.

This sequence belongs to the serpin family. In terms of assembly, interacts with CELA2A. Interacts with ERGIC3 and LMAN1/ERGIC53. Interacts with PRSS1/Trypsin. As to expression, plasma.

It localises to the secreted. Its function is as follows. Inhibitor of serine proteases. Its primary target is elastase, but it also has a moderate affinity for plasmin and thrombin. Inhibits trypsin, chymotrypsin and plasminogen activator. This is Alpha-1-antitrypsin (SERPINA1) from Papio anubis (Olive baboon).